Consider the following 274-residue polypeptide: Diaminopimelate epimerase (274 aa).

Substrate is bound by residues Asn-11, Gln-44, and Asn-64. Cys-73 serves as the catalytic Proton donor. Substrate contacts are provided by residues 74–75 (GN), Asn-157, Asn-190, and 208–209 (ER). Cys-217 functions as the Proton acceptor in the catalytic mechanism. 218 to 219 (GS) contributes to the substrate binding site.

This sequence belongs to the diaminopimelate epimerase family. As to quaternary structure, homodimer (Potential). Previously DapF has been proposed to be a monomer, however it seems that it adopts a dimeric structure.

It is found in the cytoplasm. The enzyme catalyses (2S,6S)-2,6-diaminopimelate = meso-2,6-diaminopimelate. It functions in the pathway amino-acid biosynthesis; L-lysine biosynthesis via DAP pathway; DL-2,6-diaminopimelate from LL-2,6-diaminopimelate: step 1/1. With respect to regulation, inhibited by LL-aziridino (LL-AziDAP), DL-aziridino (DL-AziDAP). Also inhibited by (2S,3R,6S)-2,6-diamino-3-fluoropimelate (L,L-3-fluoro-DAP) and (2R,3S,6S)-2,6-diamino-3-fluoropimelate (D,L-3-fluoro-DAP). In terms of biological role, catalyzes the stereoinversion of LL-2,6-diaminopimelate (L,L-DAP) to meso-diaminopimelate (meso-DAP), a precursor of L-lysine and an essential component of the bacterial peptidoglycan. Only accepts DAP isomers with the L configuration. The polypeptide is Diaminopimelate epimerase (Haemophilus influenzae (strain ATCC 51907 / DSM 11121 / KW20 / Rd)).